Here is a 442-residue protein sequence, read N- to C-terminus: MKKVFIRTFGCQMNEYDSDKMLAVLAEEHGGIEQVTQADEADIILFNTCSVREKAQEKVFSDLGRVRPLKEKKPGLIIGVAGCVASQEGENIIKRAPYVDVVFGPQTLHRLPKMIVDKETSGLSQVDISFPEIEKFDHLPPARVEGGAAFVSIMEGCSKYCSFCVVPYTRGEEFSRPLNDVLTEIANLAQQGVKEINLLGQNVNAYRGEMDDGEICDFATLLRIVHEIPGIERMRFTTSHPREFTDSIIECYRDLPKLVSHLHLPIQSGSDRVLSAMKRGYTALEYKSIIRKLRAIRPDLCLSSDFIVGFPGETEREFEQTLKLVKDIAFDLSFVFIYSPRPGTPAANLHDDTPHEEKVRRLEALNEVIEAETARINQTMIGTVQRCLVEGISKKDPDQLQARTANNRVVNFTGTPDMINQMIDLEITEAYTFSLRGKIVEA.

Positions 2–120 (KKVFIRTFGC…LPKMIVDKET (119 aa)) constitute an MTTase N-terminal domain. Residues Cys-11, Cys-49, Cys-83, Cys-157, Cys-161, and Cys-164 each contribute to the [4Fe-4S] cluster site. Residues 143-375 (RVEGGAAFVS…NEVIEAETAR (233 aa)) form the Radical SAM core domain. The TRAM domain maps to 378 to 441 (QTMIGTVQRC…TFSLRGKIVE (64 aa)).

It belongs to the methylthiotransferase family. MiaB subfamily. Monomer. Requires [4Fe-4S] cluster as cofactor.

The protein resides in the cytoplasm. The catalysed reaction is N(6)-dimethylallyladenosine(37) in tRNA + (sulfur carrier)-SH + AH2 + 2 S-adenosyl-L-methionine = 2-methylsulfanyl-N(6)-dimethylallyladenosine(37) in tRNA + (sulfur carrier)-H + 5'-deoxyadenosine + L-methionine + A + S-adenosyl-L-homocysteine + 2 H(+). Catalyzes the methylthiolation of N6-(dimethylallyl)adenosine (i(6)A), leading to the formation of 2-methylthio-N6-(dimethylallyl)adenosine (ms(2)i(6)A) at position 37 in tRNAs that read codons beginning with uridine. This chain is tRNA-2-methylthio-N(6)-dimethylallyladenosine synthase, found in Neisseria meningitidis serogroup A / serotype 4A (strain DSM 15465 / Z2491).